The chain runs to 1478 residues: DNA-directed RNA polymerase subunit beta' (1478 aa).

Positions 535, 537, and 539 each coordinate Mg(2+). 4 residues coordinate Zn(2+): Cys-1034, Cys-1109, Cys-1116, and Cys-1119.

Belongs to the RNA polymerase beta' chain family. In terms of assembly, the RNAP catalytic core consists of 2 alpha, 1 beta, 1 beta' and 1 omega subunit. When a sigma factor is associated with the core the holoenzyme is formed, which can initiate transcription. Requires Mg(2+) as cofactor. The cofactor is Zn(2+).

It catalyses the reaction RNA(n) + a ribonucleoside 5'-triphosphate = RNA(n+1) + diphosphate. Functionally, DNA-dependent RNA polymerase catalyzes the transcription of DNA into RNA using the four ribonucleoside triphosphates as substrates. The chain is DNA-directed RNA polymerase subunit beta' from Mycoplasmopsis agalactiae (strain NCTC 10123 / CIP 59.7 / PG2) (Mycoplasma agalactiae).